A 249-amino-acid polypeptide reads, in one-letter code: Ubiquinone/menaquinone biosynthesis C-methyltransferase UbiE (249 aa).

S-adenosyl-L-methionine contacts are provided by residues threonine 72, aspartate 93, and 121 to 122; that span reads DA.

Belongs to the class I-like SAM-binding methyltransferase superfamily. MenG/UbiE family.

It catalyses the reaction a 2-demethylmenaquinol + S-adenosyl-L-methionine = a menaquinol + S-adenosyl-L-homocysteine + H(+). The catalysed reaction is a 2-methoxy-6-(all-trans-polyprenyl)benzene-1,4-diol + S-adenosyl-L-methionine = a 5-methoxy-2-methyl-3-(all-trans-polyprenyl)benzene-1,4-diol + S-adenosyl-L-homocysteine + H(+). It functions in the pathway quinol/quinone metabolism; menaquinone biosynthesis; menaquinol from 1,4-dihydroxy-2-naphthoate: step 2/2. It participates in cofactor biosynthesis; ubiquinone biosynthesis. Its function is as follows. Methyltransferase required for the conversion of demethylmenaquinol (DMKH2) to menaquinol (MKH2) and the conversion of 2-polyprenyl-6-methoxy-1,4-benzoquinol (DDMQH2) to 2-polyprenyl-3-methyl-6-methoxy-1,4-benzoquinol (DMQH2). The protein is Ubiquinone/menaquinone biosynthesis C-methyltransferase UbiE of Saccharophagus degradans (strain 2-40 / ATCC 43961 / DSM 17024).